A 117-amino-acid polypeptide reads, in one-letter code: Probable non-functional T cell receptor gamma variable (117 aa).

The first 20 residues, 1-20 (MRWALAVLLAFLSPASQISS), serve as a signal peptide directing secretion. Positions 21–117 (NLEGRTKSVT…GFYYCATWDR (97 aa)) constitute an Ig-like domain. A disulfide bridge connects residues Cys41 and Cys112. The N-linked (GlcNAc...) asparagine glycan is linked to Asn105.

In terms of assembly, gamma-delta TR is a heterodimer composed of a gamma and delta chain; disulfide-linked. The gamma-delta TR is associated with the transmembrane signaling CD3 coreceptor proteins following the stoichiometry: a single gamma-delta TR heterodimer associates with one CD3D-CD3E heterodimer, one CD3G-CD3E heterodimer and one CD247 homodimer forming a stable octameric structure. Upon activation, gamma-delta TR complex associates with FCER1G to initiate intracellular signaling.

The protein localises to the cell membrane. Functionally, probable non-functional open reading frame (ORF) of V region of the variable domain of T cell receptor (TR) gamma chain. Non-functional ORF generally cannot participate in the synthesis of a productive T cell receptor (TR) chain due to altered V-(D)-J or switch recombination and/or splicing site (at mRNA level) and/or conserved amino acid change (protein level). Gamma-delta TRs recognize a variety of self and foreign non-peptide antigens frequently expressed at the epithelial boundaries between the host and external environment, including endogenous lipids presented by MH-like protein CD1D and phosphoantigens presented by butyrophilin-like molecule BTN3A1. Upon antigen recognition induces rapid, innate-like immune responses involved in pathogen clearance and tissue repair. Binding of gamma-delta TR complex to antigen triggers phosphorylation of immunoreceptor tyrosine-based activation motifs (ITAMs) in the CD3 chains by the LCK and FYN kinases, allowing the recruitment, phosphorylation, and activation of ZAP70 that facilitates phosphorylation of the scaffolding proteins LCP2 and LAT. This lead to the formation of a supramolecular signalosome that recruits the phospholipase PLCG1, resulting in calcium mobilization and ERK activation, ultimately leading to T cell expansion and differentiation into effector cells. Gamma-delta TRs are produced through somatic rearrangement of a limited repertoire of variable (V), diversity (D), and joining (J) genes. The potential diversity of gamma-delta TRs is conferred by the unique ability to rearrange (D) genes in tandem and to utilize all three reading frames. The combinatorial diversity is considerably increased by the sequence exonuclease trimming and random nucleotide (N) region additions which occur during the V-(D)-J rearrangements. This chain is Probable non-functional T cell receptor gamma variable, found in Homo sapiens (Human).